The primary structure comprises 350 residues: Renin receptor (350 aa).

Residues 1–17 (MAVLVVLLFFLVAGALG) form the signal peptide. Residues 18 to 302 (NEFSILRSPG…YNLAYKYNLE (285 aa)) are Extracellular-facing. Residues 303-323 (YSVVFNLVLWIMIGLALAVII) traverse the membrane as a helical segment. The Cytoplasmic segment spans residues 324–350 (TSYNIWNMDPGYDSIIYRMTNQKIRID). Positions 346 to 350 (KIRID) match the Mediates retrograde transport to the ER motif.

As to quaternary structure, interacts with renin. Accessory component of the multisubunit proton-transporting vacuolar (V)-ATPase protein pump. Interacts (via N-terminus) with ATP6AP1 (via N-terminus). Interacts with ATP6V0D1; ATP6V0D1 is a V-ATPase complex subunit and the interaction promotes V-ATPase complex assembly. Interacts with TMEM9; TMEM9 is a V-ATPase assembly regulator and the interaction induces the interaction with ATP6V0D1. Interacts with VMA21 (via N-terminus); VMA21 is a V-ATPase accessory component. Phosphorylated. In terms of processing, proteolytically cleaved by a furin-like convertase in the trans-Golgi network to generate N- and C-terminal fragments. Expressed in glutamatergic and GABAergic neurons with highest levels in the cortex, the hippocampus, the medial habenular nucleus, the cerebellum, the medulla and the olfactory bulb (at protein level).

The protein localises to the endoplasmic reticulum membrane. It localises to the lysosome membrane. The protein resides in the cytoplasmic vesicle. Its subcellular location is the autophagosome membrane. It is found in the cell projection. The protein localises to the dendritic spine membrane. It localises to the axon. The protein resides in the endosome membrane. Its subcellular location is the clathrin-coated vesicle membrane. It is found in the secretory vesicle. The protein localises to the synaptic vesicle membrane. In terms of biological role, multifunctional protein which functions as a renin, prorenin cellular receptor and is involved in the assembly of the lysosomal proton-transporting V-type ATPase (V-ATPase) and the acidification of the endo-lysosomal system. May mediate renin-dependent cellular responses by activating ERK1 and ERK2. By increasing the catalytic efficiency of renin in AGT/angiotensinogen conversion to angiotensin I, may also play a role in the renin-angiotensin system (RAS). Through its function in V-type ATPase (v-ATPase) assembly and acidification of the lysosome it regulates protein degradation and may control different signaling pathways important for proper brain development, synapse morphology and synaptic transmission. The chain is Renin receptor from Mus musculus (Mouse).